The following is a 277-amino-acid chain: Formamidopyrimidine-DNA glycosylase (277 aa).

Proline 2 acts as the Schiff-base intermediate with DNA in catalysis. Glutamate 3 (proton donor) is an active-site residue. Residue lysine 58 is the Proton donor; for beta-elimination activity of the active site. DNA-binding residues include histidine 94, arginine 113, and arginine 156. An FPG-type zinc finger spans residues 241–277 (LVYGREGVPCPNCGAEHPIQRITQAGRSTFFCPTCQK). The Proton donor; for delta-elimination activity role is filled by arginine 267.

The protein belongs to the FPG family. In terms of assembly, monomer. The cofactor is Zn(2+).

The catalysed reaction is Hydrolysis of DNA containing ring-opened 7-methylguanine residues, releasing 2,6-diamino-4-hydroxy-5-(N-methyl)formamidopyrimidine.. It carries out the reaction 2'-deoxyribonucleotide-(2'-deoxyribose 5'-phosphate)-2'-deoxyribonucleotide-DNA = a 3'-end 2'-deoxyribonucleotide-(2,3-dehydro-2,3-deoxyribose 5'-phosphate)-DNA + a 5'-end 5'-phospho-2'-deoxyribonucleoside-DNA + H(+). Involved in base excision repair of DNA damaged by oxidation or by mutagenic agents. Acts as a DNA glycosylase that recognizes and removes damaged bases. Has a preference for oxidized purines, such as 7,8-dihydro-8-oxoguanine (8-oxoG). Has AP (apurinic/apyrimidinic) lyase activity and introduces nicks in the DNA strand. Cleaves the DNA backbone by beta-delta elimination to generate a single-strand break at the site of the removed base with both 3'- and 5'-phosphates. The protein is Formamidopyrimidine-DNA glycosylase of Gluconobacter oxydans (strain 621H) (Gluconobacter suboxydans).